The primary structure comprises 266 residues: Mitochondrial intermembrane space import and assembly protein 40 (266 aa).

The N-terminal 28 residues, 1 to 28, are a transit peptide targeting the mitochondrion; that stretch reads MFRQVSVRALRRAAGRSVCASRAQMVRH. Residues 29-44 are Mitochondrial matrix-facing; it reads SSTLGGGKGSYNLDMP. A helical; Signal-anchor for type II membrane protein membrane pass occupies residues 45-61; the sequence is ALALAAGVTLLAGYMVY. Residues 62 to 266 are Mitochondrial intermembrane-facing; the sequence is PRAPKAKQAA…AESAKSDEGH (205 aa). Residues 87–98 are compositionally biased toward polar residues; that stretch reads ASLQASAPVQAT. Residues 87 to 180 form a disordered region; it reads ASLQASAPVQ…GQQGAYNPDT (94 aa). Low complexity-rich tracts occupy residues 130-157 and 165-175; these read AEVGETQAEQAPAVETEQAAEAEQAAEA and AGEAAQGQQGA. Cystine bridges form between Cys187–Cys189, Cys198–Cys231, and Cys208–Cys221. One can recognise a CHCH domain in the interval 195–239; sequence HGPCGEEFKAAFACFVYSEAEPKGIDCVEKFQVMQDCFRQHPEHY. 2 short sequence motifs (cx9C motif) span residues 198–208 and 221–231; these read CGEEFKAAFAC and CVEKFQVMQDC. Residues 242-266 are disordered; the sequence is QLESEEQAVRETEAAAESAKSDEGH. Residues 248–266 show a composition bias toward basic and acidic residues; it reads QAVRETEAAAESAKSDEGH.

Monomer. Cu(2+) serves as cofactor. Requires Zn(2+) as cofactor.

Its subcellular location is the mitochondrion inner membrane. Its function is as follows. Required for the import and folding of small cysteine-containing proteins (small Tim) in the mitochondrial intermembrane space (IMS). Forms a redox cycle with ERV1 that involves a disulfide relay system. Precursor proteins to be imported into the IMS are translocated in their reduced form into the mitochondria. The oxidized form of MIA40 forms a transient intermolecular disulfide bridge with the reduced precursor protein, resulting in oxidation of the precursor protein that now contains an intramolecular disulfide bond and is able to undergo folding in the IMS. This chain is Mitochondrial intermembrane space import and assembly protein 40 (MIA40), found in Eremothecium gossypii (strain ATCC 10895 / CBS 109.51 / FGSC 9923 / NRRL Y-1056) (Yeast).